Consider the following 320-residue polypeptide: Pyrroline-5-carboxylate reductase 2 (320 aa).

S2 carries the post-translational modification N-acetylserine. NADP(+) contacts are provided by residues 6-11 (IGAGQL) and S34. NADPH is bound by residues A8, Q10, L11, S34, E36, N56, V70, K71, and A97. NADP(+)-binding positions include N56, 69–72 (AVKP), and 95–97 (CAA). E164 is an L-proline binding site. An NADPH-binding site is contributed by N230. Positions 237 and 238 each coordinate L-proline. The interval 298 to 320 (TTLTPTSSGKLLTRSPVPGGKKD) is disordered. S304 carries the post-translational modification Phosphoserine.

It belongs to the pyrroline-5-carboxylate reductase family. In terms of assembly, homodecamer; composed of 5 homodimers. Interacts with LTO1.

The protein resides in the cytoplasm. The protein localises to the mitochondrion. The catalysed reaction is L-proline + NADP(+) = (S)-1-pyrroline-5-carboxylate + NADPH + 2 H(+). It carries out the reaction L-proline + NAD(+) = (S)-1-pyrroline-5-carboxylate + NADH + 2 H(+). It functions in the pathway amino-acid biosynthesis; L-proline biosynthesis; L-proline from L-glutamate 5-semialdehyde: step 1/1. Its function is as follows. Oxidoreductase that catalyzes the last step in proline biosynthesis, which corresponds to the reduction of pyrroline-5-carboxylate to L-proline using NAD(P)H. At physiologic concentrations, has higher specific activity in the presence of NADH. Involved in cellular response to oxidative stress. In some cell types, such as erythrocytes, its primary function may be the generation of NADP(+). The protein is Pyrroline-5-carboxylate reductase 2 (PYCR2) of Bos taurus (Bovine).